The sequence spans 614 residues: Jacalin-related lectin 14 (614 aa).

Jacalin-type lectin domains are found at residues 27 to 169 (VQKM…YFSW), 172 to 314 (PRKM…YFTT), 317 to 462 (PTKS…YFSP), and 468 to 611 (AEKL…HVVP).

Belongs to the jacalin lectin family.

In Arabidopsis thaliana (Mouse-ear cress), this protein is Jacalin-related lectin 14 (JAL14).